The primary structure comprises 210 residues: ATP-dependent dethiobiotin synthetase BioD (210 aa).

13–18 (GIGKTV) provides a ligand contact to ATP. Residue T17 participates in Mg(2+) binding. K33 is a catalytic residue. E101 provides a ligand contact to Mg(2+). ATP-binding positions include 101–104 (EGAG) and 185–187 (PWL).

The protein belongs to the dethiobiotin synthetase family. Homodimer. Requires Mg(2+) as cofactor.

It localises to the cytoplasm. It catalyses the reaction (7R,8S)-7,8-diammoniononanoate + CO2 + ATP = (4R,5S)-dethiobiotin + ADP + phosphate + 3 H(+). It participates in cofactor biosynthesis; biotin biosynthesis; biotin from 7,8-diaminononanoate: step 1/2. Functionally, catalyzes a mechanistically unusual reaction, the ATP-dependent insertion of CO2 between the N7 and N8 nitrogen atoms of 7,8-diaminopelargonic acid (DAPA, also called 7,8-diammoniononanoate) to form a ureido ring. This chain is ATP-dependent dethiobiotin synthetase BioD, found in Bradyrhizobium sp. (strain BTAi1 / ATCC BAA-1182).